We begin with the raw amino-acid sequence, 290 residues long: Membrane protein insertase YidC 2 (290 aa).

The signal sequence occupies residues 1–19 (MKKKALLPLFLGIMIFLAG). A lipid anchor (N-palmitoyl cysteine) is attached at Cys20. Cys20 carries the S-diacylglycerol cysteine lipid modification. The next 5 membrane-spanning stretches (helical) occupy residues 56 to 76 (FGLA…PFML), 134 to 154 (MLGC…YFVL), 176 to 196 (PDIW…VVSS), 211 to 231 (MVIS…ALGL), and 232 to 252 (YWSV…IYYS). The tract at residues 266–290 (YEREHNPSSKKKGKNTQVVSKKNKK) is disordered. A compositionally biased stretch (polar residues) spans 280–290 (NTQVVSKKNKK).

It belongs to the OXA1/ALB3/YidC family. Type 2 subfamily.

It localises to the cell membrane. Its function is as follows. Required for the insertion and/or proper folding and/or complex formation of integral membrane proteins into the membrane. Involved in integration of membrane proteins that insert both dependently and independently of the Sec translocase complex, as well as at least some lipoproteins. The chain is Membrane protein insertase YidC 2 from Staphylococcus epidermidis (strain ATCC 35984 / DSM 28319 / BCRC 17069 / CCUG 31568 / BM 3577 / RP62A).